Consider the following 110-residue polypeptide: UPF0122 protein SaurJH9_1295 (110 aa).

It belongs to the UPF0122 family.

Functionally, might take part in the signal recognition particle (SRP) pathway. This is inferred from the conservation of its genetic proximity to ftsY/ffh. May be a regulatory protein. This is UPF0122 protein SaurJH9_1295 from Staphylococcus aureus (strain JH9).